Here is an 89-residue protein sequence, read N- to C-terminus: Small ribosomal subunit protein uS15 (89 aa).

Belongs to the universal ribosomal protein uS15 family. Part of the 30S ribosomal subunit. Forms a bridge to the 50S subunit in the 70S ribosome, contacting the 23S rRNA.

One of the primary rRNA binding proteins, it binds directly to 16S rRNA where it helps nucleate assembly of the platform of the 30S subunit by binding and bridging several RNA helices of the 16S rRNA. Its function is as follows. Forms an intersubunit bridge (bridge B4) with the 23S rRNA of the 50S subunit in the ribosome. The polypeptide is Small ribosomal subunit protein uS15 (Caulobacter vibrioides (strain NA1000 / CB15N) (Caulobacter crescentus)).